A 511-amino-acid chain; its full sequence is Inner membrane ABC transporter permease protein YnjC (511 aa).

Over 1–8 (MATPLRYA) the chain is Cytoplasmic. The helical transmembrane segment at 9–29 (LIFLLWAMVAVIYAPLIPAAL) threads the bilayer. Residues 30–62 (TLISPALSLTHWQALFADPQLPQALLATLVSTT) lie on the Periplasmic side of the membrane. One can recognise an ABC transmembrane type-1 1 domain in the interval 54–255 (LLATLVSTTI…MLLLAAYVLL (202 aa)). A helical transmembrane segment spans residues 63–83 (IAAVGALLIALLVIVALWPGP). The Cytoplasmic portion of the chain corresponds to 84-91 (KWQRMCAR). Residues 92 to 112 (LPWLLAIPHVAFATSALLLFA) form a helical membrane-spanning segment. Residues 113–130 (DGGLLYDYFPYFTPPMDR) are Periplasmic-facing. The chain crosses the membrane as a helical span at residues 131-151 (FGIGLGLTLAVKESAFLLWIL). Residues 152 to 189 (AAVLSEKWLLQQVIVLDSLGYSRWQCLNWLLLPSVAPA) are Cytoplasmic-facing. The chain crosses the membrane as a helical span at residues 190–210 (LAMAMLAIVAWSLSVVDVAII). At 211 to 239 (LGPGNPPTLAVISWQWLTQGDIDQQTKGA) the chain is on the periplasmic side. Residues 240–260 (LASLLLMLLLAAYVLLSYLLW) form a helical membrane-spanning segment. The Cytoplasmic segment spans residues 261–284 (RSWRRTIPRVDGVRKPATPLLPGN). A helical membrane pass occupies residues 285 to 305 (TLAIFLPLTGVLCVVLLAILA). Topologically, residues 306-318 (DQSTINSEALINS) are periplasmic. One can recognise an ABC transmembrane type-1 2 domain in the interval 315-496 (LINSLTMGLV…LLPLIIFALT (182 aa)). Residues 319 to 339 (LTMGLVATFIALLLLLLWLEW) traverse the membrane as a helical segment. The Cytoplasmic portion of the chain corresponds to 340-345 (GPQRRQ). A helical transmembrane segment spans residues 346-366 (LWLWLPILLPALPLVAGQYTL). Topologically, residues 367–374 (ALWLKLDG) are periplasmic. The helical transmembrane segment at 375–395 (SWTAVVWGHLLWVMPWMLFIL) threads the bilayer. At 396-432 (QPAWQRIDSRLILIAQTLGWSRAKIFFYVKCPLMLRP) the chain is on the cytoplasmic side. The chain crosses the membrane as a helical span at residues 433-453 (VLIAFAVGFAVGIAQYMPTLW). Residues 454-485 (LGAGRFPTLTTEAVALSSGGSNGILAAQALWQ) are Periplasmic-facing. Residues 486-506 (LLLPLIIFALTALVAKWVGYV) form a helical membrane-spanning segment. Residues 507–511 (RQGLR) are Cytoplasmic-facing.

The protein belongs to the binding-protein-dependent transport system permease family.

The protein resides in the cell inner membrane. Functionally, probably part of the binding-protein-dependent transport system YnjCD. Probably responsible for the translocation of the substrate across the membrane. In Escherichia coli (strain K12), this protein is Inner membrane ABC transporter permease protein YnjC (ynjC).